The following is a 121-amino-acid chain: Probable V-type proton ATPase subunit F (121 aa).

It belongs to the V-ATPase F subunit family. In terms of assembly, V-ATPase is a heteromultimeric enzyme made up of two complexes: the ATP-hydrolytic V1 complex and the proton translocation V0 complex. The V1 complex consists of three catalytic AB heterodimers that form a heterohexamer, three peripheral stalks each consisting of EG heterodimers, one central rotor including subunits D and F, and the regulatory subunits C and H. The proton translocation complex V0 consists of the proton transport subunit a, a ring of proteolipid subunits c9c'', rotary subunit d, subunits e and f, and the accessory subunits vah-19/Ac45 and vah-20/PRR.

Subunit of the V1 complex of vacuolar(H+)-ATPase (V-ATPase), a multisubunit enzyme composed of a peripheral complex (V1) that hydrolyzes ATP and a membrane integral complex (V0) that translocates protons. V-ATPase is responsible for acidifying and maintaining the pH of intracellular compartments and in some cell types, is targeted to the plasma membrane, where it is responsible for acidifying the extracellular environment. Required along with other vacuolar ATPase components for the removal of protein aggregates which form in immature oocytes in the distal gonad. This removal occurs as the oocytes mature and move to the proximal gonad, is triggered by the introduction of sperm through mating and occurs before fertilization. The introduction of sperm triggers V-ATPase accumulation in proximal oocytes and induces lysosomal acidification which leads to engulfing of protein aggregates by lysosomes and subsequent clearance of the aggregates. Lysosomal acidification also leads to changes in mitochondrial morphology and function. Mitochondria in distal immature oocytes are fragmented, produce high levels of reactive oxygen species (ROS) and have high membrane potential, indicative of metabolic inactivity. In contrast, mitochondria in proximal mature oocytes are tubular with lower ROS levels and membrane potential, indicative of an active metabolic state required for aggregate mobilization before clearance. The chain is Probable V-type proton ATPase subunit F from Caenorhabditis elegans.